The following is a 393-amino-acid chain: Formate-dependent phosphoribosylglycinamide formyltransferase (393 aa).

N(1)-(5-phospho-beta-D-ribosyl)glycinamide-binding positions include 22 to 23 and E82; that span reads EL. Residues R114, K155, 160–165, 195–198, and E203 each bind ATP; these read SSGKGQ and EGFI. The region spanning 119 to 308 is the ATP-grasp domain; sequence RLAAEELDLP…QFALHARAIL (190 aa). Mg(2+) contacts are provided by E267 and E279. N(1)-(5-phospho-beta-D-ribosyl)glycinamide contacts are provided by residues D286, K356, and 363–364; that span reads RR.

It belongs to the PurK/PurT family. In terms of assembly, homodimer.

It carries out the reaction N(1)-(5-phospho-beta-D-ribosyl)glycinamide + formate + ATP = N(2)-formyl-N(1)-(5-phospho-beta-D-ribosyl)glycinamide + ADP + phosphate + H(+). Its pathway is purine metabolism; IMP biosynthesis via de novo pathway; N(2)-formyl-N(1)-(5-phospho-D-ribosyl)glycinamide from N(1)-(5-phospho-D-ribosyl)glycinamide (formate route): step 1/1. Functionally, involved in the de novo purine biosynthesis. Catalyzes the transfer of formate to 5-phospho-ribosyl-glycinamide (GAR), producing 5-phospho-ribosyl-N-formylglycinamide (FGAR). Formate is provided by PurU via hydrolysis of 10-formyl-tetrahydrofolate. The chain is Formate-dependent phosphoribosylglycinamide formyltransferase from Pseudomonas fluorescens (strain Pf0-1).